A 538-amino-acid chain; its full sequence is Lipid scramblase CLPTM1L (538 aa).

At 1-10 the chain is on the cytoplasmic side; the sequence is MWSGRSSFTS. A helical transmembrane segment spans residues 11 to 31; it reads LVVGVFVVYVVHTCWVMYGIV. At 32–284 the chain is on the extracellular side; sequence YTRPCSGHGR…VKGIFVDTNL (253 aa). N91 and N101 each carry an N-linked (GlcNAc...) asparagine glycan. Residues 285-305 traverse the membrane as a helical segment; sequence YFLALTFFVAAFHLLFDFLAF. The Cytoplasmic segment spans residues 306 to 324; sequence KNDISFWKKKKSMIGMSTK. Residues 325-341 form a helical membrane-spanning segment; the sequence is AVLWRCFSTVVIFLFLL. At 342–402 the chain is on the extracellular side; the sequence is DEQTSLPVLV…TEEYDAQAMK (61 aa). The helical transmembrane segment at 403-423 threads the bilayer; sequence YLSYLLYPLCIGGAIYSLLNI. Over 424–428 the chain is Cytoplasmic; sequence KYKSW. The helical transmembrane segment at 429–449 threads the bilayer; the sequence is YSWLINSFVNGVYAFGFLFML. At 450-538 the chain is on the extracellular side; that stretch reads PQLFVNYKMK…DTPQRKPHTD (89 aa).

It belongs to the CLPTM1 family.

Its subcellular location is the endoplasmic reticulum membrane. It carries out the reaction a 6-(alpha-D-glucosaminyl)-1-(1,2-diacyl-sn-glycero-3-phospho)-1D-myo-inositol(in) = a 6-(alpha-D-glucosaminyl)-1-(1,2-diacyl-sn-glycero-3-phospho)-1D-myo-inositol(out). The catalysed reaction is 6-(alpha-D-glucosaminyl)-(1-octadecanoyl,2-(9Z)-octadecenoyl-sn-glycero-3-phospho)-1D-myo-inositol(in) = 6-(alpha-D-glucosaminyl)-(1-octadecanoyl,2-(9Z)-octadecenoyl-sn-glycero-3-phospho)-1D-myo-inositol(out). The enzyme catalyses a 1,2-diacyl-sn-glycero-3-phospho-(1D-myo-inositol)(in) = a 1,2-diacyl-sn-glycero-3-phospho-(1D-myo-inositol)(out). It catalyses the reaction a 1,2-diacyl-sn-glycero-3-phosphocholine(in) = a 1,2-diacyl-sn-glycero-3-phosphocholine(out). It carries out the reaction a 1,2-diacyl-sn-glycero-3-phosphoethanolamine(in) = a 1,2-diacyl-sn-glycero-3-phosphoethanolamine(out). Functionally, scramblase that mediates the translocation of glucosaminylphosphatidylinositol (alpha-D-GlcN-(1-6)-(1,2-diacyl-sn-glycero-3-phospho)-1D-myo-inositol, GlcN-PI) across the endoplasmic reticulum (ER) membrane, from the cytosolic leaflet to the luminal leaflet of the ER membrane, where it participates in the biosynthesis of glycosylphosphatidylinositol (GPI). GPI is a lipid glycoconjugate involved in post-translational modification of proteins. Can also translocate 1,2-diacyl-sn-glycero-3-phospho-(1D-myo-inositol) (phosphatidylinositol or PI), as well as several other phospholipids (1,2-diacyl-sn-glycero-3-phosphocholine, 1,2-diacyl-sn-glycero-3-phosphoethanolamine), and N-acetylglucosaminylphosphatidylinositol (GlcNAc-PI) in vitro. This Bos taurus (Bovine) protein is Lipid scramblase CLPTM1L (CLPTM1L).